We begin with the raw amino-acid sequence, 571 residues long: Proline--tRNA ligase (571 aa).

The protein belongs to the class-II aminoacyl-tRNA synthetase family. ProS type 1 subfamily. Homodimer.

Its subcellular location is the cytoplasm. It catalyses the reaction tRNA(Pro) + L-proline + ATP = L-prolyl-tRNA(Pro) + AMP + diphosphate. Catalyzes the attachment of proline to tRNA(Pro) in a two-step reaction: proline is first activated by ATP to form Pro-AMP and then transferred to the acceptor end of tRNA(Pro). As ProRS can inadvertently accommodate and process non-cognate amino acids such as alanine and cysteine, to avoid such errors it has two additional distinct editing activities against alanine. One activity is designated as 'pretransfer' editing and involves the tRNA(Pro)-independent hydrolysis of activated Ala-AMP. The other activity is designated 'posttransfer' editing and involves deacylation of mischarged Ala-tRNA(Pro). The misacylated Cys-tRNA(Pro) is not edited by ProRS. This Vibrio vulnificus (strain YJ016) protein is Proline--tRNA ligase.